A 251-amino-acid polypeptide reads, in one-letter code: GTP cyclohydrolase FolE2 (251 aa).

The protein belongs to the GTP cyclohydrolase IV family.

The enzyme catalyses GTP + H2O = 7,8-dihydroneopterin 3'-triphosphate + formate + H(+). It functions in the pathway cofactor biosynthesis; 7,8-dihydroneopterin triphosphate biosynthesis; 7,8-dihydroneopterin triphosphate from GTP: step 1/1. Converts GTP to 7,8-dihydroneopterin triphosphate. The polypeptide is GTP cyclohydrolase FolE2 (Desulfotalea psychrophila (strain LSv54 / DSM 12343)).